Consider the following 250-residue polypeptide: PHD finger protein ALFIN-LIKE 3 (250 aa).

An N-acetylmethionine modification is found at Met-1. Residues 146–192 form a disordered region; that stretch reads DKSSAANQNGNKSKSNSKVRTSEGKSSKTKQPKEEDEEIDEDDEDDH. Over residues 149–163 the composition is skewed to low complexity; the sequence is SAANQNGNKSKSNSK. Residues 179 to 192 show a composition bias toward acidic residues; it reads EEDEEIDEDDEDDH. The PHD-type zinc-finger motif lies at 194 to 246; the sequence is ETLCGACGDSDGADEFWICCDLCEKWFHGKCVKITPARAEHIKQYKCPSCSNK.

Belongs to the Alfin family. As to expression, ubiquitously expressed.

Its subcellular location is the nucleus. In terms of biological role, histone-binding component that specifically recognizes H3 tails trimethylated on 'Lys-4' (H3K4me3), which mark transcription start sites of virtually all active genes. The chain is PHD finger protein ALFIN-LIKE 3 (AL3) from Arabidopsis thaliana (Mouse-ear cress).